The following is a 485-amino-acid chain: Ulvan lyase (485 aa).

Residues 1-33 form the signal peptide; it reads MIRNDTMLKGQFVLKKTQIALSAALMGSVLLTG. Cysteine 34 carries N-palmitoyl cysteine lipidation. Residue cysteine 34 is the site of S-diacylglycerol cysteine attachment. Substrate-binding residues include asparagine 64 and asparagine 126. A disordered region spans residues 108–128; sequence FKAGTSELGRRDGGKKFDNHG. The span at 115–128 shows a compositional bias: basic and acidic residues; sequence LGRRDGGKKFDNHG. Catalysis depends on histidine 127, which acts as the Proton donor. Residues lysine 129 and histidine 147 each coordinate substrate. The active-site Proton acceptor is tyrosine 192. Substrate contacts are provided by arginine 208, histidine 212, and tyrosine 250. Zn(2+) is bound at residue histidine 212. Positions 268, 270, and 282 each coordinate Zn(2+). Residue histidine 282 coordinates substrate.

The protein belongs to the polysaccharide lyase 25 family.

The protein localises to the cell membrane. Its function is as follows. Ulvan lyase involved in ulvan degradation. Ulvan is the main polysaccharide component of the Ulvales (green seaweed) cell wall. It is composed of disaccharide building blocks comprising 3-sulfated rhamnose (Rha3S) linked to D-glucuronic acid (GlcA), L-iduronic acid (IduA), or D-xylose (Xyl). Ulvan lyase catalyzes the endolytic cleavage of the glycosidic bond between Rha3S and the uronic acids GlcA or IduA, producing oligosaccharides that have unsaturated 4-deoxy-L-threo-hex-4-enopyranosiduronic acid (deltaUA) at the non-reducing end. This results eventually in the degradation of the ulvan polysaccharide into deltaUA-Rha3S disaccharides and deltaUA-Rha3S-Xyl-Rha3S tetrasaccharides. This chain is Ulvan lyase, found in Alteromonas sp. (strain LOR).